Here is a 183-residue protein sequence, read N- to C-terminus: Ferredoxin-2, mitochondrial (183 aa).

The transit peptide at 1–52 directs the protein to the mitochondrion; sequence MAASMARGGVSARVLLQAARGTWWNRPGGTSGSGEGVALGTTRKFQATGSRP. The interval 45–65 is disordered; it reads FQATGSRPAGEEDAGGPERPG. Positions 68–170 constitute a 2Fe-2S ferredoxin-type domain; the sequence is VNVVFVDRSG…GAEFTLPKIT (103 aa). Positions 105, 111, 114, and 151 each coordinate [2Fe-2S] cluster.

It belongs to the adrenodoxin/putidaredoxin family. In terms of assembly, component of the mitochondrial core iron-sulfur cluster (ISC) complex composed of NFS1, LYRM4, NDUFAB1, ISCU, FXN, and FDX2; this complex is a heterohexamer containing two copies of each monomer. Form a heterodimer complex with NFS1. Interacts (in both their reduced and oxidized states) with the cysteine desulfurase complex; this interaction stimulates cysteine desulfurase activity, and serves as a reductant for Fe-S cluster assembly. The cofactor is [2Fe-2S] cluster. As to expression, widely expressed, with highest levels in testis, kidney and brain (at protein level). Expressed in muscle (at protein level). Expressed in fibroblasts (at protein level).

Its subcellular location is the mitochondrion. It is found in the mitochondrion matrix. Its function is as follows. Electron donor, of the core iron-sulfur cluster (ISC) assembly complex, that acts to reduce the persulfide into sulfide during [2Fe-2S] clusters assembly on the scaffolding protein ISCU. The core iron-sulfur cluster (ISC) assembly complex is involved in the de novo synthesis of a [2Fe-2S] cluster, the first step of the mitochondrial iron-sulfur protein biogenesis. This process is initiated by the cysteine desulfurase complex (NFS1:LYRM4:NDUFAB1) that produces persulfide which is delivered on the scaffold protein ISCU in a FXN-dependent manner. Then this complex is stabilized by FDX2 which provides reducing equivalents to accomplish the [2Fe-2S] cluster assembly. Finally, the [2Fe-2S] cluster is transferred from ISCU to chaperone proteins, including HSCB, HSPA9 and GLRX5. Essential for coenzyme Q biosynthesis: together with FDXR, transfers the electrons required for the hydroxylation reaction performed by COQ6. This chain is Ferredoxin-2, mitochondrial, found in Homo sapiens (Human).